Consider the following 142-residue polypeptide: HTH-type transcriptional regulator LrpA1 (142 aa).

Positions 1–72 (MSTESTEERI…GQSIAMVGID (72 aa)) constitute an HTH asnC-type domain. The H-T-H motif DNA-binding region spans 22–41 (YAAIAERADVSKPTVRKYID).

Functionally, transcription factor that regulates genes involved in amino acid metabolism. Represses the aspB3 gene, coding for an aspartate transaminase, in the presence of L-aspartate. Another target gene is the basal transcriptional regulator tfbB. Also binds its own promoter. In Halobacterium salinarum (strain ATCC 29341 / DSM 671 / R1), this protein is HTH-type transcriptional regulator LrpA1 (lrpA1).